The chain runs to 450 residues: Chromosomal replication initiator protein DnaA (450 aa).

Positions 1–84 (MENIHDLWDR…AVKFIIPPNQ (84 aa)) are domain I, interacts with DnaA modulators. Residues 84 to 111 (QDDEELEFQSSKKKQRKPYEETNDFPQS) form a domain II region. Residues 89 to 108 (LEFQSSKKKQRKPYEETNDF) form a disordered region. Residues 112-328 (MLNPKYTFDT…GALIRVVAYS (217 aa)) are domain III, AAA+ region. Positions 156, 158, 159, and 160 each coordinate ATP. Residues 329–450 (SLINKEITAD…QEIQEKLKQL (122 aa)) are domain IV, binds dsDNA.

This sequence belongs to the DnaA family. In terms of assembly, oligomerizes as a right-handed, spiral filament on DNA at oriC.

The protein localises to the cytoplasm. Plays an essential role in the initiation and regulation of chromosomal replication. ATP-DnaA binds to the origin of replication (oriC) to initiate formation of the DNA replication initiation complex once per cell cycle. Binds the DnaA box (a 9 base pair repeat at the origin) and separates the double-stranded (ds)DNA. Forms a right-handed helical filament on oriC DNA; dsDNA binds to the exterior of the filament while single-stranded (ss)DNA is stabiized in the filament's interior. The ATP-DnaA-oriC complex binds and stabilizes one strand of the AT-rich DNA unwinding element (DUE), permitting loading of DNA polymerase. After initiation quickly degrades to an ADP-DnaA complex that is not apt for DNA replication. Binds acidic phospholipids. This chain is Chromosomal replication initiator protein DnaA, found in Geobacillus kaustophilus (strain HTA426).